The primary structure comprises 253 residues: DnaJ homolog subfamily C member 8 (253 aa).

Ala2 is subject to N-acetylalanine. Residue Ser35 is modified to Phosphoserine. Residues 57–124 form the J domain; that stretch reads NPFEVLQIDP…QKKRALDVIQ (68 aa). An N6-acetyllysine modification is found at Lys146. Residues 181 to 222 are compositionally biased toward basic and acidic residues; it reads EAKEMHERKRQREEEIEAQEKAKREREWQKNFEESRDGRVDS. The disordered stretch occupies residues 181–253; it reads EAKEMHERKR…PPKVKMEQRE (73 aa). Short sequence motifs (nuclear localization signal) lie at residues 189–192 and 203–206; these read KRQR and KRER. Ser222 carries the post-translational modification Phosphoserine. Over residues 231 to 240 the composition is skewed to basic residues; the sequence is KGKKEKKNRT. The segment at 232–253 is essential for polyglutamine aggregation suppression; it reads GKKEKKNRTFLRPPKVKMEQRE.

Interacts with SRPK1. Interacts with HSP70 (HSPA1A or HSPA1B).

It is found in the nucleus. In terms of biological role, suppresses polyglutamine (polyQ) aggregation of ATXN3 in neuronal cells. The chain is DnaJ homolog subfamily C member 8 (Dnajc8) from Mus musculus (Mouse).